Here is a 211-residue protein sequence, read N- to C-terminus: Thiamine-phosphate synthase (211 aa).

Residues Gln37–Lys41 and Asn69 each bind 4-amino-2-methyl-5-(diphosphooxymethyl)pyrimidine. Mg(2+) is bound by residues Asp70 and Asp89. Ser108 lines the 4-amino-2-methyl-5-(diphosphooxymethyl)pyrimidine pocket. Thr134–Thr136 serves as a coordination point for 2-[(2R,5Z)-2-carboxy-4-methylthiazol-5(2H)-ylidene]ethyl phosphate. Residue Lys137 coordinates 4-amino-2-methyl-5-(diphosphooxymethyl)pyrimidine. 2-[(2R,5Z)-2-carboxy-4-methylthiazol-5(2H)-ylidene]ethyl phosphate-binding positions include Gly166 and Val186–Ser187.

It belongs to the thiamine-phosphate synthase family. It depends on Mg(2+) as a cofactor.

The enzyme catalyses 2-[(2R,5Z)-2-carboxy-4-methylthiazol-5(2H)-ylidene]ethyl phosphate + 4-amino-2-methyl-5-(diphosphooxymethyl)pyrimidine + 2 H(+) = thiamine phosphate + CO2 + diphosphate. It carries out the reaction 2-(2-carboxy-4-methylthiazol-5-yl)ethyl phosphate + 4-amino-2-methyl-5-(diphosphooxymethyl)pyrimidine + 2 H(+) = thiamine phosphate + CO2 + diphosphate. It catalyses the reaction 4-methyl-5-(2-phosphooxyethyl)-thiazole + 4-amino-2-methyl-5-(diphosphooxymethyl)pyrimidine + H(+) = thiamine phosphate + diphosphate. It functions in the pathway cofactor biosynthesis; thiamine diphosphate biosynthesis; thiamine phosphate from 4-amino-2-methyl-5-diphosphomethylpyrimidine and 4-methyl-5-(2-phosphoethyl)-thiazole: step 1/1. Condenses 4-methyl-5-(beta-hydroxyethyl)thiazole monophosphate (THZ-P) and 2-methyl-4-amino-5-hydroxymethyl pyrimidine pyrophosphate (HMP-PP) to form thiamine monophosphate (TMP). This Salmonella choleraesuis (strain SC-B67) protein is Thiamine-phosphate synthase.